The chain runs to 79 residues: Putative defensin-like protein 309 (79 aa).

An N-terminal signal peptide occupies residues 1–19 (MKILAFFIFVLLIFSCSSS). Disulfide bonds link C31/C50, C37/C55, and C41/C57.

The protein belongs to the DEFL family.

It is found in the secreted. The protein is Putative defensin-like protein 309 of Arabidopsis thaliana (Mouse-ear cress).